The following is a 972-amino-acid chain: POM121-like protein 2 (972 aa).

Disordered regions lie at residues 1–67 (MGSY…PANP), 281–302 (LKKA…SGQL), 328–359 (TEED…IPEM), 406–431 (GISS…PVTD), 676–726 (LGLS…AIDG), and 953–972 (SKTL…TYKK). Over residues 40-57 (RVQHVHRAQPARRHRPAR) the composition is skewed to basic residues. Polar residues-rich tracts occupy residues 287-302 (SPNS…SGQL) and 339-352 (VPSN…TGTA). Positions 413-431 (PSIASTQASPSSPTTPVTD) are enriched in low complexity. Residues 677-696 (GLSSTNQPPVTSSNSNVTSA) are compositionally biased toward polar residues. A compositionally biased stretch (low complexity) spans 697 to 706 (LTSSLGSSPK).

It belongs to the POM121 family.

This chain is POM121-like protein 2 (Pom121l2), found in Mus musculus (Mouse).